A 418-amino-acid chain; its full sequence is Gamma-glutamyl phosphate reductase (418 aa).

It belongs to the gamma-glutamyl phosphate reductase family.

It is found in the cytoplasm. It catalyses the reaction L-glutamate 5-semialdehyde + phosphate + NADP(+) = L-glutamyl 5-phosphate + NADPH + H(+). Its pathway is amino-acid biosynthesis; L-proline biosynthesis; L-glutamate 5-semialdehyde from L-glutamate: step 2/2. Its function is as follows. Catalyzes the NADPH-dependent reduction of L-glutamate 5-phosphate into L-glutamate 5-semialdehyde and phosphate. The product spontaneously undergoes cyclization to form 1-pyrroline-5-carboxylate. The polypeptide is Gamma-glutamyl phosphate reductase (Geotalea daltonii (strain DSM 22248 / JCM 15807 / FRC-32) (Geobacter daltonii)).